The primary structure comprises 522 residues: MKNTQTNGTHPIIDKKPNGTLNGDHQEYPTFSQEKLDDSIKRGIDLQVFRYPSTGINVLIAGAGLGGITCALECWRKGHNVRIIDRSPSPVWTGDNVQIQPSAILLLRHWPDMGYEIEENQYDVDMSYYRQTGERIWGPAPPMFNDPEHLPGRRGFPSVNAHSRIKLYRAFLKQAERVGIYVEWGCKVVEYWEDVEGHAGGVVLENGEKRTADIVVAADGLRTKSMTIVPGMPDQLTTSGKAIYRAGYPVEHALKDPTVREMWNFKPEDKPIWQFWLGNGSHNMMCLTHDLAFWSFIHSHAESASESWIPDIDPAEVITEMEKNDAVHPAIAALIRTAPKGSVVNWQLKFRDPHEQWTSPGGHVVQLGDAAHAFLPTSGNGATQAIEDGVTLATCLQLAGKAQAANATKVYNKLRFQRVSCGQKMGFVNQQLKQHTDWDAIMKNPALIRSRYPKWVWSHDPEAYAYEKFAEALTHVVSGGRVPLVNTNFPKGHKYRHWTMKEVQEQIKAGQKLEDLQDGDWS.

Positions 1–27 (MKNTQTNGTHPIIDKKPNGTLNGDHQE) are disordered. Arg164 serves as a coordination point for FAD. Arg245 is a catalytic residue. Residues Asp369 and Ala382 each coordinate FAD.

Belongs to the paxM FAD-dependent monooxygenase family. The cofactor is FAD.

It functions in the pathway polyketide biosynthesis. Its function is as follows. FAD-dependent monooxygenase; part of the gene cluster that mediates the biosynthesis of fusarubins, highly pigmented naphthoquinones responsible for the coloration of the fruiting bodies. The non-reducing polyketide synthase FSR1 is responsible for the condensation of seven acetyl-CoA units to yield a haptaketide. After rings A and B are formed by aldol-type cyclization, the PKS-derived product is released as 6-O-demethylfusarubinaldehyde. Then, two hydroxyl groups at C-5 and C-10 are incorporated by FSR3, and simultaneously hydroxyl groups at C-6 and C-8 are methylated by FSR2. The aldehyde is, on the one hand, reduced by FSR3 to 8-O-methylfusarubin alcohol, which equilibrates mainly with 8-O-methylfusarubin and only small amounts of 8-O-methylnectriafurone. On the other hand, the aldehyde can be oxidized to form 8-O-methylfusarubinic acid, a reaction driven by FSR3 equilibrating with 8-O-methylfusarubinlactone, finally resulting in 8-O-methylanhydrofusarubinlactol after a further reduction step and loss of water. 8-O-Methylfusarubinic acid can also undergo decarboxylation, resulting in 8-O-methyl-13-hydroxynorjavanicin after another hydroxylation step at C-13. Both steps are most likely also accomplished by FSR3. No enzymatic function has been determined so far for either FSR4 and FSR5. Their deletion does not alter the product spectrum, but the possibility that they catalyze specific enzymatic steps during perithecium development cannot be ruled out. FSR4 might possess a regulatory function in the biosynthesis of fusarubins. In Gibberella fujikuroi (strain CBS 195.34 / IMI 58289 / NRRL A-6831) (Bakanae and foot rot disease fungus), this protein is FAD-dependent monooxygenase fsr3.